Consider the following 654-residue polypeptide: Endoplasmic reticulum chaperone BiP (654 aa).

A signal peptide spans 1-18; that stretch reads MKFTVVAAALLLLCAVRA. The segment at 1-80 is required for interaction with ELAPOR1; sequence MKFTVVAAAL…EGERLIGDAA (80 aa). 36-39 serves as a coordination point for ATP; it reads GTTY. S86 carries the phosphoserine modification. Residue K96 participates in ATP binding. K125 carries the post-translational modification N6-acetyllysine. The interval 125-280 is nucleotide-binding (NBD); sequence KPYIQVDIGG…KKKTGKDVRK (156 aa). Y160 is modified (3'-nitrotyrosine). K213 is subject to N6-acetyllysine. An ATP-binding site is contributed by 227–229; that stretch reads GGT. N6-acetyllysine is present on K271. Residue 293–300 coordinates ATP; it reads EKAKRALS. K326 is subject to N6-acetyllysine. Residue K352 forms a Glycyl lysine isopeptide (Lys-Gly) (interchain with G-Cter in SUMO2) linkage. K353 is modified (N6-acetyllysine; alternate). Residue K353 forms a Glycyl lysine isopeptide (Lys-Gly) (interchain with G-Cter in SUMO1); alternate linkage. 364-367 contributes to the ATP binding site; it reads GSTR. The interval 409–419 is interdomain linker; sequence QDTGDLVLLDV. A substrate-binding (SBD) region spans residues 420–500; sequence CPLTLGIETV…PRGVPQIEVT (81 aa). Residue K447 is modified to N6-succinyllysine. Omega-N-methylarginine is present on R492. Position 518 is an O-AMP-threonine; alternate (T518). Position 518 is a phosphothreonine; alternate (T518). At K585 the chain carries N6,N6,N6-trimethyllysine; by METTL21A; in vitro. K585 is modified (N6,N6-dimethyllysine; alternate). K585 carries the post-translational modification N6-methyllysine; alternate. The residue at position 591 (K591) is an N6-methyllysine. The disordered stretch occupies residues 631–654; it reads ISKLYGSGGPPPTGEEDTSEKDEL. T643 and T648 each carry phosphothreonine. Positions 644–654 are enriched in acidic residues; the sequence is GEEDTSEKDEL. At S649 the chain carries Phosphoserine. The short motif at 651–654 is the Prevents secretion from ER element; sequence KDEL.

This sequence belongs to the heat shock protein 70 family. Monomer and homooligomer; homooligomerization via the interdomain linker inactivates the chaperone activity and acts as a storage of HSPA5/BiP molecules. Interacts with DNAJC1 (via J domain). Component of an EIF2 complex at least composed of CELF1/CUGBP1, CALR, CALR3, EIF2S1, EIF2S2, HSP90B1 and HSPA5. Part of a large chaperone multiprotein complex comprising DNAJB11, HSP90B1, HSPA5, HYOU, PDIA2, PDIA4, PDIA6, PPIB, SDF2L1, UGGT1 and very small amounts of ERP29, but not, or at very low levels, CALR nor CANX. Interacts with TMEM132A and TRIM21. May form a complex with ERLEC1, OS9, SEL1L and SYVN1. Interacts with DNAJC10. Interacts with DNAJB9/ERdj4; leading to recruit HSPA5/BiP to ERN1/IRE1. Interacts with ERN1/IRE1 (via luminal domain); the interaction takes place following interaction with DNAJB9/ERdj4 and leads to inactivate ERN1/IRE1, the interaction also competitively inhibits ERN1 interaction with MANF. Interacts directly with MANF (via SAP domain); the interaction inhibits ATP binding to HSPA5/BiP and subsequent nucleotide exchange. Interacts with EIF2AK3/PERK (via luminal domain); interaction leads to inactivate EIF2AK3/PERK. Interacts with MX1. Interacts with METTL23. Interacts with CEMIP; the interaction induces calcium leakage from the endoplasmic reticulum and cell migration. Interacts with PCSK4 form; the interaction takes place in the endoplasmic reticulum. Interacts with CIPC. Interacts with CCDC88B (via C-terminus); the interaction opposes ERN1-mediated JNK activation, protecting against apoptosis. Interacts with INPP5K; necessary for INPP5K localization at the endoplasmic reticulum. Interacts with MANF; the interaction is direct. Interacts with LOXL2; leading to activate the ERN1/IRE1-XBP1 pathway of the unfolded protein response. Interacts with CLU under stressed condition; interaction increases CLU protein stability; facilitates its retrotranslocation and redistribution to the mitochondria; cooperatively suppress stress-induced apoptosis by stabilizing mitochondrial membrane integrity. Interacts with CCDC47. Interacts with CLN3. Interacts with ELAPOR1; may regulate the function of HSPA5 in apoptosis and cell proliferation. Interacts with CASP7. Interacts with ILDR2; the interaction stabilizes ILDR2 expression. Interacts with ADAM7. Post-translationally, in unstressed cells, AMPylation at Thr-518 by FICD inactivates the chaperome activity: AMPylated form is locked in a relatively inert state and only weakly stimulated by J domain-containing proteins. In response to endoplasmic reticulum stress, de-AMPylation by the same protein, FICD, restores the chaperone activity.

It is found in the endoplasmic reticulum lumen. Its subcellular location is the melanosome. The protein resides in the cytoplasm. It localises to the cell surface. The enzyme catalyses ATP + H2O = ADP + phosphate + H(+). The chaperone activity is regulated by ATP-induced allosteric coupling of the nucleotide-binding (NBD) and substrate-binding (SBD) domains. In the ADP-bound and nucleotide-free (apo) states, the two domains have little interaction. In contrast, in the ATP-bound state the two domains are tightly coupled, which results in drastically accelerated kinetics in both binding and release of polypeptide substrates. J domain-containing co-chaperones (DNAJB9/ERdj4 or DNAJC10/ERdj5) stimulate the ATPase activity and are required for efficient substrate recognition by HSPA5/BiP. Homooligomerization inactivates participating HSPA5/BiP protomers and probably act as reservoirs to store HSPA5/BiP molecules when they are not needed by the cell. Endoplasmic reticulum chaperone that plays a key role in protein folding and quality control in the endoplasmic reticulum lumen. Involved in the correct folding of proteins and degradation of misfolded proteins via its interaction with DNAJC10/ERdj5, probably to facilitate the release of DNAJC10/ERdj5 from its substrate. Acts as a key repressor of the EIF2AK3/PERK and ERN1/IRE1-mediated unfolded protein response (UPR). In the unstressed endoplasmic reticulum, recruited by DNAJB9/ERdj4 to the luminal region of ERN1/IRE1, leading to disrupt the dimerization of ERN1/IRE1, thereby inactivating ERN1/IRE1. Also binds and inactivates EIF2AK3/PERK in unstressed cells. Accumulation of misfolded protein in the endoplasmic reticulum causes release of HSPA5/BiP from ERN1/IRE1 and EIF2AK3/PERK, allowing their homodimerization and subsequent activation. Plays an auxiliary role in post-translational transport of small presecretory proteins across endoplasmic reticulum (ER). May function as an allosteric modulator for SEC61 channel-forming translocon complex, likely cooperating with SEC62 to enable the productive insertion of these precursors into SEC61 channel. Appears to specifically regulate translocation of precursors having inhibitory residues in their mature region that weaken channel gating. May also play a role in apoptosis and cell proliferation. In Rattus norvegicus (Rat), this protein is Endoplasmic reticulum chaperone BiP.